Consider the following 1792-residue polypeptide: Eukaryotic translation initiation factor 4G (1792 aa).

Basic and acidic residues predominate over residues 1-12 (MSQRGDRGEGHA). Disordered regions lie at residues 1-285 (MSQR…PRPP), 424-446 (DSSG…TYGS), 491-590 (SPSM…PTPV), 612-659 (NSVP…EDLK), 678-761 (GVNK…NESH), 874-912 (VASE…EITR), 960-993 (SSSI…LDDW), 999-1018 (MSTP…EANG), 1275-1299 (GERE…EERE), 1407-1503 (WQQR…HRTT), and 1537-1600 (ELSS…KLYS). Residues 21-42 (FGGGHRGGGGVGGAGKGGGGSS) are compositionally biased toward gly residues. Positions 88–107 (PLRPPAPQNAPAHVPVPAPR) are enriched in pro residues. 2 stretches are compositionally biased toward polar residues: residues 147 to 156 (RISSTSTSQG) and 179 to 191 (STMQ…SSAP). 3 stretches are compositionally biased toward low complexity: residues 216 to 243 (PQAP…PLQQ), 263 to 278 (PSQV…SVPN), and 432 to 442 (PSVQQQSQPVS). Positions 491 to 517 (SPSMNTGPGSNKDNLAGSTTSGHSQVT) are enriched in polar residues. 3 stretches are compositionally biased toward basic and acidic residues: residues 545-564 (DVNK…KDNE), 571-587 (KSGE…EKHP), and 633-643 (DSNKNATKDTR). The segment covering 644–654 (NLSQEPQSASS) has biased composition (polar residues). Residues 699-718 (AADASSIDRSSARSTSESTE) are compositionally biased toward low complexity. Residues 964–990 (ADHELPDESSEKEVNMGEDEGKKKVEL) are compositionally biased toward basic and acidic residues. The EIF4E-binding stretch occupies residues 1018-1030 (GRKRYSRDFLLTL). Positions 1183–1406 (QRQLKAILNK…RDSIDLRKNK (224 aa)) constitute an MIF4G domain. Residues 1278–1289 (EEAEADKTEEEG) show a composition bias toward acidic residues. 2 stretches are compositionally biased toward basic and acidic residues: residues 1290-1299 (EIKQTKEERE) and 1411-1432 (RKVE…ERHA). Low complexity-rich tracts occupy residues 1439 to 1450 (RGSVVGSGPRRG) and 1461 to 1470 (SAAALASPSS). Composition is skewed to basic and acidic residues over residues 1490 to 1503 (IRFE…HRTT) and 1559 to 1572 (AREE…DRSG). A compositionally biased stretch (polar residues) spans 1576-1593 (PNTQFAGPSNRPASQEGR). The 125-residue stretch at 1603-1727 (DLREKSISAI…SLQEVGTLIE (125 aa)) folds into the MI domain.

Belongs to the eukaryotic initiation factor 4G family. As to quaternary structure, EIF4F is a multi-subunit complex, the composition of which varies with external and internal environmental conditions. It is composed of at least EIF4A, EIF4E and EIF4G. In higher plants two isoforms of EIF4F have been identified, named isoform EIF4F and isoform EIF(iso)4F. Isoform EIF4F has subunits p220 and p26, whereas isoform EIF(iso)4F has subunits p82 and p28.

Component of the protein complex eIF4F, which is involved in the recognition of the mRNA cap, ATP-dependent unwinding of 5'-terminal secondary structure and recruitment of mRNA to the ribosome. This Oryza sativa subsp. japonica (Rice) protein is Eukaryotic translation initiation factor 4G.